Here is a 256-residue protein sequence, read N- to C-terminus: Hydroxyacylglutathione hydrolase (256 aa).

The Zn(2+) site is built by His58, His60, Asp62, His63, His116, Asp135, and His173.

Belongs to the metallo-beta-lactamase superfamily. Glyoxalase II family. Monomer. The cofactor is Zn(2+).

The enzyme catalyses an S-(2-hydroxyacyl)glutathione + H2O = a 2-hydroxy carboxylate + glutathione + H(+). Its pathway is secondary metabolite metabolism; methylglyoxal degradation; (R)-lactate from methylglyoxal: step 2/2. Thiolesterase that catalyzes the hydrolysis of S-D-lactoyl-glutathione to form glutathione and D-lactic acid. The sequence is that of Hydroxyacylglutathione hydrolase from Hyphomonas neptunium (strain ATCC 15444).